The sequence spans 476 residues: Protein THYLAKOID RHODANESE-LIKE, chloroplastic (476 aa).

Residues 1-21 (MAATTTILSSAAPTPLTAPPR) constitute a chloroplast transit peptide. Residues 1–29 (MAATTTILSSAAPTPLTAPPRARARAPAA) are disordered. Low complexity predominate over residues 11–21 (AAPTPLTAPPR). Residues 22–58 (ARARAPAARRRRLRARDILGAALGLANGGASAALAAP) constitute a thylakoid transit peptide. Residues 100-120 (LVAAAGVAAVALPLVLAQVLG) form a helical membrane-spanning segment. The 107-residue stretch at 140–246 (EEPGAQLVDI…WLSSSLPWTA (107 aa)) folds into the Rhodanese domain. 2 helical membrane passes run 264-284 (LPVT…YTEI) and 287-307 (VLQF…LIYA). The disordered stretch occupies residues 342–476 (LPSTGTKSQP…PPSSPSPSAP (135 aa)). Low complexity predominate over residues 351–389 (PAITEAAPATAEAAPAAATATAAPPAAPVEETSTEAAPA). Residues 403–412 (LKPPSSPSPL) are compositionally biased toward pro residues. Residues 425-446 (ESAATESAPAVNSAPVAEAAPE) are compositionally biased toward low complexity. The span at 447–476 (AAPPAAPRPLSPYPNYPDLKPPSSPSPSAP) shows a compositional bias: pro residues.

In terms of assembly, component of high molecular weight thylakoid LFNRs-containing protein complexes containing LIR1, LFNR1, LFNR2, TIC62 and TROL proteins.

The protein localises to the plastid. The protein resides in the chloroplast thylakoid membrane. Rhodanese domain-containing protein required for anchoring ferredoxin--NADP reductase to the thylakoid membranes and sustaining efficient linear electron flow (LEF). The chain is Protein THYLAKOID RHODANESE-LIKE, chloroplastic from Oryza sativa subsp. indica (Rice).